Consider the following 315-residue polypeptide: Taste receptor type 2 member 3 (315 aa).

Residues Met-1 to Asp-5 lie on the Extracellular side of the membrane. The chain crosses the membrane as a helical span at residues Gly-6 to Ile-26. The Cytoplasmic segment spans residues Gly-27 to Ser-41. A helical transmembrane segment spans residues Leu-42–Leu-62. Residues Thr-63–His-93 lie on the Extracellular side of the membrane. Residues Leu-94–Ser-114 form a helical membrane-spanning segment. The Cytoplasmic portion of the chain corresponds to His-115–Arg-127. The chain crosses the membrane as a helical span at residues Val-128–Ile-148. Topologically, residues Asn-149 to Thr-185 are extracellular. A glycan (N-linked (GlcNAc...) asparagine) is linked at Asn-165. A helical membrane pass occupies residues Leu-186–Leu-206. The Cytoplasmic segment spans residues Gly-207–Arg-233. A helical membrane pass occupies residues Ile-234–Phe-254. Topologically, residues Gly-255 to Lys-265 are extracellular. A helical transmembrane segment spans residues Met-266–Gly-286. The Cytoplasmic portion of the chain corresponds to Asn-287–Ser-315.

It belongs to the G-protein coupled receptor T2R family.

The protein localises to the membrane. Its function is as follows. Gustducin-coupled receptor implicated in the perception of bitter compounds in the oral cavity and the gastrointestinal tract. Signals through PLCB2 and the calcium-regulated cation channel TRPM5. In Papio hamadryas (Hamadryas baboon), this protein is Taste receptor type 2 member 3 (TAS2R3).